The primary structure comprises 227 residues: MADS-box transcription factor 25 (227 aa).

Residues 1–61 (MGRGKIAIKR…GRLYDFSSSS (61 aa)) enclose the MADS-box domain. The K-box domain occupies 86-176 (AKFWQREVTT…RKKFNIAHQR (91 aa)). The tract at residues 183-227 (KLNSGESTSSEQVTRSSKDPGESSTPRDSRVCIDLELSQKEVEDE) is disordered. Over residues 186–197 (SGESTSSEQVTR) the composition is skewed to polar residues. Positions 198–227 (SSKDPGESSTPRDSRVCIDLELSQKEVEDE) are enriched in basic and acidic residues.

As to expression, expressed in seedling roots.

The protein resides in the nucleus. Functionally, probable transcription factor. The sequence is that of MADS-box transcription factor 25 (MADS25) from Oryza sativa subsp. japonica (Rice).